The following is a 229-amino-acid chain: Cytochrome c oxidase subunit 2 (229 aa).

Topologically, residues 1–26 (MATWAQFGLQDASSPLMEELTYFHDY) are mitochondrial intermembrane. The chain crosses the membrane as a helical span at residues 27–48 (ALIVLTLITILVFYGLVSLLLS). At 49–62 (SSTNRFFLEGQELE) the chain is on the mitochondrial matrix side. A helical transmembrane segment spans residues 63 to 82 (TIWTVVPAFILIFIALPSLQ). At 83–229 (LLYLMDEVNN…ENWVAQYIEE (147 aa)) the chain is on the mitochondrial intermembrane side. 6 residues coordinate Cu cation: histidine 161, cysteine 196, glutamate 198, cysteine 200, histidine 204, and methionine 207. Position 198 (glutamate 198) interacts with Mg(2+).

This sequence belongs to the cytochrome c oxidase subunit 2 family. As to quaternary structure, component of the cytochrome c oxidase (complex IV, CIV), a multisubunit enzyme composed of a catalytic core of 3 subunits and several supernumerary subunits. The complex exists as a monomer or a dimer and forms supercomplexes (SCs) in the inner mitochondrial membrane with ubiquinol-cytochrome c oxidoreductase (cytochrome b-c1 complex, complex III, CIII). The cofactor is Cu cation.

Its subcellular location is the mitochondrion inner membrane. The catalysed reaction is 4 Fe(II)-[cytochrome c] + O2 + 8 H(+)(in) = 4 Fe(III)-[cytochrome c] + 2 H2O + 4 H(+)(out). Functionally, component of the cytochrome c oxidase, the last enzyme in the mitochondrial electron transport chain which drives oxidative phosphorylation. The respiratory chain contains 3 multisubunit complexes succinate dehydrogenase (complex II, CII), ubiquinol-cytochrome c oxidoreductase (cytochrome b-c1 complex, complex III, CIII) and cytochrome c oxidase (complex IV, CIV), that cooperate to transfer electrons derived from NADH and succinate to molecular oxygen, creating an electrochemical gradient over the inner membrane that drives transmembrane transport and the ATP synthase. Cytochrome c oxidase is the component of the respiratory chain that catalyzes the reduction of oxygen to water. Electrons originating from reduced cytochrome c in the intermembrane space (IMS) are transferred via the dinuclear copper A center (CU(A)) of subunit 2 and heme A of subunit 1 to the active site in subunit 1, a binuclear center (BNC) formed by heme A3 and copper B (CU(B)). The BNC reduces molecular oxygen to 2 water molecules using 4 electrons from cytochrome c in the IMS and 4 protons from the mitochondrial matrix. This Paracentrotus lividus (Common sea urchin) protein is Cytochrome c oxidase subunit 2 (COII).